The following is a 69-amino-acid chain: Large ribosomal subunit protein bL32c (69 aa).

It belongs to the bacterial ribosomal protein bL32 family.

Its subcellular location is the plastid. It localises to the chloroplast. In Pelargonium hortorum (Common geranium), this protein is Large ribosomal subunit protein bL32c.